A 506-amino-acid polypeptide reads, in one-letter code: WD repeat-containing protein 55 homolog (506 aa).

Residues 1-11 are compositionally biased toward basic and acidic residues; that stretch reads MHRHDCFKTPA. Disordered stretches follow at residues 1–20, 33–87, and 100–132; these read MHRH…DDID, QEVL…SDDS, and AKRR…DEDD. Positions 33 to 48 are enriched in acidic residues; sequence QEVLNESESDDDEYDL. The segment covering 61-74 has biased composition (low complexity); sequence GNISSNESISSDGS. Residues 78–87 show a composition bias toward acidic residues; sequence NAEDTDSDDS. WD repeat units follow at residues 156–195, 200–239, 243–281, 284–323, 326–365, and 410–449; these read RLED…NKLL, VHAK…LKKL, AHDD…AIFE, EVED…LYVQ, PYEE…YHCD, and QHNM…DFGD. Residues 480-506 form a disordered region; that stretch reads DMTKEQDDDDNDDGGNNTTAAGSNNVT. Over residues 493–506 the composition is skewed to low complexity; the sequence is GGNNTTAAGSNNVT.

It belongs to the WD repeat WDR55 family.

This is WD repeat-containing protein 55 homolog from Drosophila mojavensis (Fruit fly).